A 226-amino-acid chain; its full sequence is MSQIRWLGHAAVEILISGKRVIIDPLIKDNPLSPVKLNYLEGVSVVGVTHDHYDHLGDVVEILKMNSNAKLFATFDLEMYLVNQFKVPEAQLIPANVGGYVEHEGIRLALTKAVHSSEHSDPTGIVVSDGRTTIYHAGDTGLFEDMKLIGQVFQPDYALLPIGGRFTMDPRQAVIAVDMIKPRKAAIPIHFNTWDMIRVDPQEFVKGVKDKGYEAILLQPGQSIEL.

Belongs to the UPF0173 family.

In Metallosphaera sedula (strain ATCC 51363 / DSM 5348 / JCM 9185 / NBRC 15509 / TH2), this protein is UPF0173 metal-dependent hydrolase Msed_2125.